Consider the following 827-residue polypeptide: Glycerol-3-phosphate acyltransferase (827 aa).

The short motif at 325-330 (CHRSHM) is the HXXXXD motif element.

Belongs to the GPAT/DAPAT family.

Its subcellular location is the cell inner membrane. It carries out the reaction sn-glycerol 3-phosphate + an acyl-CoA = a 1-acyl-sn-glycero-3-phosphate + CoA. Its pathway is phospholipid metabolism; CDP-diacylglycerol biosynthesis; CDP-diacylglycerol from sn-glycerol 3-phosphate: step 1/3. The chain is Glycerol-3-phosphate acyltransferase from Shigella sonnei (strain Ss046).